The sequence spans 202 residues: Imidazoleglycerol-phosphate dehydratase (202 aa).

The protein belongs to the imidazoleglycerol-phosphate dehydratase family.

It is found in the cytoplasm. It catalyses the reaction D-erythro-1-(imidazol-4-yl)glycerol 3-phosphate = 3-(imidazol-4-yl)-2-oxopropyl phosphate + H2O. The protein operates within amino-acid biosynthesis; L-histidine biosynthesis; L-histidine from 5-phospho-alpha-D-ribose 1-diphosphate: step 6/9. The protein is Imidazoleglycerol-phosphate dehydratase of Brucella abortus (strain S19).